The chain runs to 343 residues: Anthranilate phosphoribosyltransferase (343 aa).

Residues glycine 84, 87–88 (GD), threonine 92, 94–97 (NIST), 112–120 (KHGNRGVSS), and serine 124 each bind 5-phospho-alpha-D-ribose 1-diphosphate. Glycine 84 contributes to the anthranilate binding site. Serine 96 is a binding site for Mg(2+). Asparagine 115 is an anthranilate binding site. Arginine 170 contributes to the anthranilate binding site. Residues aspartate 229 and glutamate 230 each coordinate Mg(2+).

Belongs to the anthranilate phosphoribosyltransferase family. Homodimer. It depends on Mg(2+) as a cofactor.

The catalysed reaction is N-(5-phospho-beta-D-ribosyl)anthranilate + diphosphate = 5-phospho-alpha-D-ribose 1-diphosphate + anthranilate. Its pathway is amino-acid biosynthesis; L-tryptophan biosynthesis; L-tryptophan from chorismate: step 2/5. Catalyzes the transfer of the phosphoribosyl group of 5-phosphorylribose-1-pyrophosphate (PRPP) to anthranilate to yield N-(5'-phosphoribosyl)-anthranilate (PRA). In Burkholderia ambifaria (strain ATCC BAA-244 / DSM 16087 / CCUG 44356 / LMG 19182 / AMMD) (Burkholderia cepacia (strain AMMD)), this protein is Anthranilate phosphoribosyltransferase.